The following is a 61-amino-acid chain: Photosystem II reaction center protein K (61 aa).

The propeptide occupies 1–24 (MLNIFSLISICLNSALYSSSFFFG). Residues 40–60 (MPVIPVFFFLLAFVWQAAVSF) form a helical membrane-spanning segment.

Belongs to the PsbK family. As to quaternary structure, PSII is composed of 1 copy each of membrane proteins PsbA, PsbB, PsbC, PsbD, PsbE, PsbF, PsbH, PsbI, PsbJ, PsbK, PsbL, PsbM, PsbT, PsbX, PsbY, PsbZ, Psb30/Ycf12, at least 3 peripheral proteins of the oxygen-evolving complex and a large number of cofactors. It forms dimeric complexes.

It is found in the plastid. The protein resides in the chloroplast thylakoid membrane. Functionally, one of the components of the core complex of photosystem II (PSII). PSII is a light-driven water:plastoquinone oxidoreductase that uses light energy to abstract electrons from H(2)O, generating O(2) and a proton gradient subsequently used for ATP formation. It consists of a core antenna complex that captures photons, and an electron transfer chain that converts photonic excitation into a charge separation. The protein is Photosystem II reaction center protein K of Jasminum nudiflorum (Winter jasmine).